The following is a 266-amino-acid chain: Hydroxyethylthiazole kinase (266 aa).

Met-43 serves as a coordination point for substrate. The ATP site is built by Arg-119 and Thr-166. Gly-193 contacts substrate.

Belongs to the Thz kinase family. Mg(2+) serves as cofactor.

It catalyses the reaction 5-(2-hydroxyethyl)-4-methylthiazole + ATP = 4-methyl-5-(2-phosphooxyethyl)-thiazole + ADP + H(+). The protein operates within cofactor biosynthesis; thiamine diphosphate biosynthesis; 4-methyl-5-(2-phosphoethyl)-thiazole from 5-(2-hydroxyethyl)-4-methylthiazole: step 1/1. Functionally, catalyzes the phosphorylation of the hydroxyl group of 4-methyl-5-beta-hydroxyethylthiazole (THZ). In Methanococcus vannielii (strain ATCC 35089 / DSM 1224 / JCM 13029 / OCM 148 / SB), this protein is Hydroxyethylthiazole kinase.